A 1326-amino-acid polypeptide reads, in one-letter code: F-box/WD repeat-containing protein 7 (1326 aa).

Disordered stretches follow at residues 1–58, 123–187, 318–351, 399–549, 615–642, and 797–843; these read MERG…AEVG, DSSS…IEDE, TVSNPSPAASANAAAPEEASTSNSSSTSSSALSR, GSKA…SGCS, RSNPPAASGAGSVGANPTASVRQRRNGS, and TPRS…NPPP. The span at 9–39 shows a compositional bias: polar residues; sequence SSESVTSAGERTQSAVTSSTSTWVKSQASTS. Acidic residues predominate over residues 165-187; it reads NDDDDDEEPEPEEDDEEELIEDE. The span at 320 to 348 shows a compositional bias: low complexity; it reads SNPSPAASANAAAPEEASTSNSSSTSSSA. The span at 403–464 shows a compositional bias: polar residues; it reads ANGSGTANSD…KLNLGSSLGA (62 aa). Over residues 465–486 the composition is skewed to low complexity; it reads SSCSQHRSGSSSTSKSMESSTS. The span at 495 to 504 shows a compositional bias: polar residues; sequence VYTNTNSNDY. Composition is skewed to low complexity over residues 510 to 520, 528 to 546, and 616 to 631; these read TTSGSSTSGGS, NVSASVSYSSVGSQTSQES, and SNPPAASGAGSVGANP. Polar residues-rich tracts occupy residues 632-642 and 797-824; these read TASVRQRRNGS and TPRSSQHLGPTAVLSVTPSSHLTSSTPG. Residue T813 is modified to Phosphothreonine. S825 carries the phosphoserine modification. One can recognise an F-box domain in the interval 889–935; the sequence is RDFISLLPRELALFVLSYLEPKDLLRAAQTCRSWRFLCDDNLLWKEK. WD repeat units lie at residues 992 to 1030, 1033 to 1070, 1073 to 1110, 1113 to 1150, 1153 to 1190, 1193 to 1232, and 1236 to 1273; these read GHDDHVITCLQFSGNRIVSGSDDNTLKVWSAVNGKCLRT, GHTGGVWSSQMSGNIIISGSTDRTLKVWDMDSGACVHT, GHTSTVRCMHLHGSKVVSGSRDATLRVWDIEQGSCLHV, GHLAAVRCVQYDGKLIVSGAYDYMVKIWHPERQECLHT, GHTNRVYSLQFDGLHVVSGSLDTSIRVWDVETGNCKHT, GHQSLTSGMELRQNILVSGNADSTVKVWDITTGQCLQTLS, and KHHSAVTCLQFNSRFVVTSSDDGTVKLWDVKTGDFIRN.

Part of a SCF E3 ubiquitin-protein ligase complex. Interacts with Myc and puf. Interacts with CycE. Expressed in follicle cell epithelium and imaginal disks, particularly in the morphogenetic furrow.

Its subcellular location is the nucleus. It participates in protein modification; protein ubiquitination. In terms of biological role, substrate recognition component of a SCF (SKP1-CUL1-F-box protein) E3 ubiquitin-protein ligase complex which mediates the ubiquitination and subsequent proteasomal degradation of target proteins. Probably recognizes and binds to phosphorylated target proteins. In the wing and eye, negatively regulates cell growth and proliferation by mediating the degradation of Myc and cyclin E, respectively. Required for endocycles, but not mitosis in follicle cell epithelium. The protein is F-box/WD repeat-containing protein 7 of Drosophila melanogaster (Fruit fly).